Reading from the N-terminus, the 742-residue chain is uncharacterized protein (742 aa).

The interval 1–102 is disordered; it reads MMLLKRSNDN…FTQTKPNNTD (102 aa). Low complexity predominate over residues 18–28; that stretch reads NRQNRQNNRQN. Positions 48-57 are enriched in basic and acidic residues; the sequence is RDSSRMDPVD. 2 stretches are compositionally biased toward polar residues: residues 60 to 69 and 77 to 99; these read TLISFTSGKP and HDTGTNKYSSSKLSETFTQTKPN.

This is an uncharacterized protein from Acanthamoeba polyphaga mimivirus (APMV).